The following is a 261-amino-acid chain: Cytochrome c oxidase subunit 3 (261 aa).

Topologically, residues 1–15 (MTHQTHAYHMVNPSP) are mitochondrial matrix. A helical membrane pass occupies residues 16 to 34 (WPLTGALSALLMTSGLAMW). At 35-40 (FHFNSV) the chain is on the mitochondrial intermembrane side. The helical transmembrane segment at 41 to 66 (TLLTLGLTTNMLTMYQWWRDIIREST) threads the bilayer. Topologically, residues 67–72 (FQGHHT) are mitochondrial matrix. The chain crosses the membrane as a helical span at residues 73–105 (PTVQKGLRYGMILFIISEVLFFTGFFWAFYHSS). Over 106–128 (LAPTPELGGCWPPTGISPLNPLE) the chain is Mitochondrial intermembrane. The chain crosses the membrane as a helical span at residues 129-152 (VPLLNTSVLLASGVSITWAHHSLM). At 153–155 (EGN) the chain is on the mitochondrial matrix side. Residues 156–183 (RNHMLQALFITIALGVYFTLLQASEYYE) form a helical membrane-spanning segment. Over 184-190 (APFTISD) the chain is Mitochondrial intermembrane. The chain crosses the membrane as a helical span at residues 191–223 (GIYGSTFFVATGFHGLHVIIGSTFLIVCFFRQL). Topologically, residues 224–232 (KFHFTSNHH) are mitochondrial matrix. Residues 233 to 256 (FGFEAAAWYWHFVDVVWLFLYVSI) form a helical membrane-spanning segment. Residues 257–261 (YWWGS) are Mitochondrial intermembrane-facing.

It belongs to the cytochrome c oxidase subunit 3 family. In terms of assembly, component of the cytochrome c oxidase (complex IV, CIV), a multisubunit enzyme composed of 14 subunits. The complex is composed of a catalytic core of 3 subunits MT-CO1, MT-CO2 and MT-CO3, encoded in the mitochondrial DNA, and 11 supernumerary subunits COX4I, COX5A, COX5B, COX6A, COX6B, COX6C, COX7A, COX7B, COX7C, COX8 and NDUFA4, which are encoded in the nuclear genome. The complex exists as a monomer or a dimer and forms supercomplexes (SCs) in the inner mitochondrial membrane with NADH-ubiquinone oxidoreductase (complex I, CI) and ubiquinol-cytochrome c oxidoreductase (cytochrome b-c1 complex, complex III, CIII), resulting in different assemblies (supercomplex SCI(1)III(2)IV(1) and megacomplex MCI(2)III(2)IV(2)).

Its subcellular location is the mitochondrion inner membrane. It carries out the reaction 4 Fe(II)-[cytochrome c] + O2 + 8 H(+)(in) = 4 Fe(III)-[cytochrome c] + 2 H2O + 4 H(+)(out). In terms of biological role, component of the cytochrome c oxidase, the last enzyme in the mitochondrial electron transport chain which drives oxidative phosphorylation. The respiratory chain contains 3 multisubunit complexes succinate dehydrogenase (complex II, CII), ubiquinol-cytochrome c oxidoreductase (cytochrome b-c1 complex, complex III, CIII) and cytochrome c oxidase (complex IV, CIV), that cooperate to transfer electrons derived from NADH and succinate to molecular oxygen, creating an electrochemical gradient over the inner membrane that drives transmembrane transport and the ATP synthase. Cytochrome c oxidase is the component of the respiratory chain that catalyzes the reduction of oxygen to water. Electrons originating from reduced cytochrome c in the intermembrane space (IMS) are transferred via the dinuclear copper A center (CU(A)) of subunit 2 and heme A of subunit 1 to the active site in subunit 1, a binuclear center (BNC) formed by heme A3 and copper B (CU(B)). The BNC reduces molecular oxygen to 2 water molecules using 4 electrons from cytochrome c in the IMS and 4 protons from the mitochondrial matrix. The chain is Cytochrome c oxidase subunit 3 (MT-CO3) from Neotragus moschatus (Suni).